Here is a 1025-residue protein sequence, read N- to C-terminus: Presequence protease, mitochondrial (1025 aa).

His90 is a Zn(2+) binding site. Catalysis depends on Glu93, which acts as the Proton acceptor. His94 is a binding site for Zn(2+). Glu166 is an active-site residue. Glu197 contributes to the Zn(2+) binding site.

The protein belongs to the peptidase M16 family. PreP subfamily. As to quaternary structure, monomer and homodimer; homodimerization is induced by binding of the substrate. The cofactor is Zn(2+).

It localises to the mitochondrion intermembrane space. Its subcellular location is the mitochondrion matrix. Its function is as follows. Degrades mitochondrial transit peptides after their cleavage in the intermembrane space or in the matrix, and presequence peptides; clearance of these peptides is required to keep the presequence processing machinery running. Preferentially cleaves the N-terminal side of paired basic amino acid residues. Also degrades other unstructured peptides. May function as an ATP-dependent peptidase as opposed to a metalloendopeptidase. The protein is Presequence protease, mitochondrial (cym1) of Aspergillus oryzae (strain ATCC 42149 / RIB 40) (Yellow koji mold).